The sequence spans 228 residues: MAAQQRDCGGAAQLAGPAAEADPLGRFTCPVCLEVYEKPVQVPCGHVFCSACLQECLKPKKPVCGVCRSALAPGVRAVELERQIESTETSCHGCRKNFFLSKIRSHVATCSKYQNYIMEGVKATIKDASLQPRNVPNRYTFPCPYCPEKNFDQEGLVEHCKLFHSTDTKSVVCPICASMPWGDPNYRSANFREHIQRRHRFSYDTFVDYDVDEEDMMNQVLQRSIIDQ.

The RING-type zinc finger occupies 29–68; sequence CPVCLEVYEKPVQVPCGHVFCSACLQECLKPKKPVCGVCR. Zn(2+)-binding residues include cysteine 91 and cysteine 94. Residues 91–110 form a C2HC RNF-type zinc finger; it reads CHGCRKNFFLSKIRSHVATC. Residue lysine 102 is modified to N6-acetyllysine. Zn(2+) is bound by residues histidine 106 and cysteine 110. Position 112 is an N6-acetyllysine (lysine 112).

As to quaternary structure, interacts with XAF1, the interaction increases XAF1 stability and proapoptotic effects, and may regulate IFN signaling. Post-translationally, autoubiquitinated. Polyubiquitinated in the presence of E2 enzymes UBE2D1, UBE2D2 and UBE2D3, but only monoubiquitinated in the presence of UBE2E1. In terms of tissue distribution, expressed in numerous tissues, including skin, CD4 lymphocytes and dendritic cells. Highest levels in testis.

The protein resides in the cytoplasm. It localises to the nucleus. It carries out the reaction S-ubiquitinyl-[E2 ubiquitin-conjugating enzyme]-L-cysteine + [acceptor protein]-L-lysine = [E2 ubiquitin-conjugating enzyme]-L-cysteine + N(6)-ubiquitinyl-[acceptor protein]-L-lysine.. Its pathway is protein modification; protein ubiquitination. Its function is as follows. E3 ubiquitin-protein ligase that promotes the ubiquitination of various substrates. In turn, participates in the regulation of many biological processes including cell cycle, apoptosis, osteoclastogenesis as well as innate or adaptive immunity. Acts as a negative regulator of NF-kappa-B-dependent transcription by promoting the ubiquitination and stabilization of the NF-kappa-B inhibitor TNFAIP3. May promote the ubiquitination of TRAF6 as well. Also acts as a negative regulator of T-cell activation. Inhibits cellular dsRNA responses and interferon production by targeting MAVS component for proteasomal degradation. Ubiquitinates the CDK inhibitor CDKN1A leading to its degradationand probably also CDKN1B and CDKN1C. This activity stimulates cell cycle G1-to-S phase transition and suppresses cellular senescence. May play a role in spermatogenesis. This Homo sapiens (Human) protein is E3 ubiquitin-protein ligase RNF114 (RNF114).